The following is a 58-amino-acid chain: MLGWTLVFLVVAVIAGLLGFTGIAGAAAGIAKIIFFVFIVLLVISLLVNAFRGKSPRL.

2 helical membrane-spanning segments follow: residues 6 to 26 (LVFLVVAVIAGLLGFTGIAGA) and 28 to 48 (AGIAKIIFFVFIVLLVISLLV).

It belongs to the UPF0391 family.

Its subcellular location is the cell membrane. The polypeptide is UPF0391 membrane protein Sbal195_1447 (Shewanella baltica (strain OS195)).